Consider the following 346-residue polypeptide: Selenoprotein V (346 aa).

Disordered stretches follow at residues 1 to 40 (MNNQ…VRTR) and 151 to 206 (LDPP…PGPT). Pro residues predominate over residues 151 to 162 (LDPPPEPAPELP). A cross-link (cysteinyl-selenocysteine (Cys-Sec); redox-active) is located at residues 270 to 273 (CGLU). A non-standard amino acid (selenocysteine) is located at residue Sec-273.

It belongs to the SelWTH family. Post-translationally, truncated SELENOV proteins produced by failed UGA/Sec decoding are ubiquitinated by the CRL2(APPBP2) complex, which recognizes the glycine (Gly) at the C-terminus of truncated SELENOV proteins. Testis specific.

In terms of biological role, may be involved in a redox-related process. The polypeptide is Selenoprotein V (Homo sapiens (Human)).